A 199-amino-acid chain; its full sequence is Recombination protein RecR (199 aa).

The C4-type zinc-finger motif lies at 57–72; the sequence is CSICFNLTDTDPCAIC. Residues 80-175 enclose the Toprim domain; the sequence is RLLMVVEEAK…KVTRIAHGLP (96 aa).

Belongs to the RecR family.

Its function is as follows. May play a role in DNA repair. It seems to be involved in an RecBC-independent recombinational process of DNA repair. It may act with RecF and RecO. This Carboxydothermus hydrogenoformans (strain ATCC BAA-161 / DSM 6008 / Z-2901) protein is Recombination protein RecR.